We begin with the raw amino-acid sequence, 133 residues long: S-adenosylmethionine decarboxylase proenzyme (133 aa).

Ser65 serves as the catalytic Schiff-base intermediate with substrate; via pyruvic acid. Ser65 is subject to Pyruvic acid (Ser); by autocatalysis. His70 functions as the Proton acceptor; for processing activity in the catalytic mechanism. Cys85 serves as the catalytic Proton donor; for catalytic activity.

The protein belongs to the prokaryotic AdoMetDC family. Type 1 subfamily. In terms of assembly, heterotetramer of two alpha and two beta chains arranged as a dimer of alpha/beta heterodimers. Pyruvate is required as a cofactor. Is synthesized initially as an inactive proenzyme. Formation of the active enzyme involves a self-maturation process in which the active site pyruvoyl group is generated from an internal serine residue via an autocatalytic post-translational modification. Two non-identical subunits are generated from the proenzyme in this reaction, and the pyruvate is formed at the N-terminus of the alpha chain, which is derived from the carboxyl end of the proenzyme. The post-translation cleavage follows an unusual pathway, termed non-hydrolytic serinolysis, in which the side chain hydroxyl group of the serine supplies its oxygen atom to form the C-terminus of the beta chain, while the remainder of the serine residue undergoes an oxidative deamination to produce ammonia and the pyruvoyl group blocking the N-terminus of the alpha chain.

The catalysed reaction is S-adenosyl-L-methionine + H(+) = S-adenosyl 3-(methylsulfanyl)propylamine + CO2. It functions in the pathway amine and polyamine biosynthesis; S-adenosylmethioninamine biosynthesis; S-adenosylmethioninamine from S-adenosyl-L-methionine: step 1/1. In terms of biological role, catalyzes the decarboxylation of S-adenosylmethionine to S-adenosylmethioninamine (dcAdoMet), the propylamine donor required for the synthesis of the polyamines spermine and spermidine from the diamine putrescine. The protein is S-adenosylmethionine decarboxylase proenzyme of Brevibacillus brevis (strain 47 / JCM 6285 / NBRC 100599).